The following is a 73-amino-acid chain: Large ribosomal subunit protein bL27c (73 aa).

The protein belongs to the bacterial ribosomal protein bL27 family.

The protein localises to the plastid. Its subcellular location is the chloroplast. The protein is Large ribosomal subunit protein bL27c (rpl27) of Haptolina hirta (Plankton alga).